The primary structure comprises 241 residues: Co-chaperone protein p23-1 (241 aa).

A CS domain is found at 2–91 (SRHPEVKWAE…AEPERWNKLL (90 aa)). MGG repeat units follow at residues 129 to 131 (MGG), 132 to 134 (MGG), 135 to 137 (MGG), 138 to 140 (MGG), 141 to 143 (MGG), 144 to 146 (MGG), 147 to 149 (MGG), 150 to 152 (MGG), 162 to 164 (MGG), 165 to 167 (MGG), 168 to 170 (MGG), 171 to 173 (MGG), 180 to 182 (MGG), 183 to 185 (MGG), 186 to 188 (MGG), 189 to 191 (MGG), and 192 to 194 (MGG). The tract at residues 129–194 (MGGMGGMGGM…GMGGMGGMGG (66 aa)) is 17 X 3 AA repeats of M-G-G. The tract at residues 188 to 241 (GMGGMGGMEEFEDSDDEEETAKSGDKKDDAVKEEGLATEKAPAAEETTSVKEDK) is disordered. The segment covering 196–206 (EEFEDSDDEEE) has biased composition (acidic residues). Over residues 207–224 (TAKSGDKKDDAVKEEGLA) the composition is skewed to basic and acidic residues. The span at 225–234 (TEKAPAAEET) shows a compositional bias: low complexity.

Belongs to the p23/wos2 family. Interacts with HSP90 in an ATP-dependent manner. Interacts with HSP90-5, HSP90-6 and HSP90-7. In terms of tissue distribution, widely expressed but preferentially in the root meristem.

Its subcellular location is the cytoplasm. The protein resides in the nucleus. Acts as a co-chaperone for HSP90. Controls root development through the modulation of auxin distribution in the root meristem. The sequence is that of Co-chaperone protein p23-1 from Arabidopsis thaliana (Mouse-ear cress).